We begin with the raw amino-acid sequence, 86 residues long: Omega-theraphotoxin-Hhn1d (86 aa).

Residues 1–21 (MKSIVFVALFGLALLAVVCSA) form the signal peptide. A propeptide spanning residues 22 to 50 (SEDAHKELLKEVVRAMVVDKTDAVQAEER) is cleaved from the precursor. 3 cysteine pairs are disulfide-bonded: Cys52/Cys66, Cys59/Cys71, and Cys65/Cys78.

The protein belongs to the neurotoxin 10 (Hwtx-1) family. 17 (Hntx-9) subfamily. Expressed by the venom gland.

The protein localises to the secreted. In terms of biological role, ion channel inhibitor. This is Omega-theraphotoxin-Hhn1d from Cyriopagopus hainanus (Chinese bird spider).